Reading from the N-terminus, the 361-residue chain is MAGNTIGQLFRVTTFGESHGLALGCIVDGVPPGIPLTEADLQHDLDRRRPGTSRYTTQRREPDQVKILSGVFEGVTTGTSIGLLIENTDQRSQDYSAIKDVFRPGHADYTYEQKYGLRDYRGGGRSSARETAMRVAAGAIAKKYLAEKFGIEIRGCLTQMGDIPLEIKDWSQVEQNPFFCPDPDKIDALDELMRALKKEGDSIGAKVTVVASGVPAGLGEPVFDRLDADIAHALMSINAVKGVEIGDGFDVVALRGSQNRDEITKDGFQSNHAGGILGGISSGQQIIAHMALKPTSSITVPGRTINRFGEEVEMITKGRHDPCVGIRAVPIAEAMLAIVLMDHLLRQRAQNADVKTDIPRW.

Residues R48 and R54 each coordinate NADP(+). FMN-binding positions include 125 to 127 (RSS), 238 to 239 (NA), G278, 293 to 297 (KPTSS), and R319.

It belongs to the chorismate synthase family. In terms of assembly, homotetramer. FMNH2 is required as a cofactor.

The catalysed reaction is 5-O-(1-carboxyvinyl)-3-phosphoshikimate = chorismate + phosphate. It participates in metabolic intermediate biosynthesis; chorismate biosynthesis; chorismate from D-erythrose 4-phosphate and phosphoenolpyruvate: step 7/7. Catalyzes the anti-1,4-elimination of the C-3 phosphate and the C-6 proR hydrogen from 5-enolpyruvylshikimate-3-phosphate (EPSP) to yield chorismate, which is the branch point compound that serves as the starting substrate for the three terminal pathways of aromatic amino acid biosynthesis. This reaction introduces a second double bond into the aromatic ring system. This Escherichia coli O157:H7 protein is Chorismate synthase.